Here is a 652-residue protein sequence, read N- to C-terminus: Probable serine/threonine-protein kinase mkcD (652 aa).

3 disordered regions span residues 1-47 (MNNI…RKNK), 163-198 (NPID…LTNV), and 257-289 (QQKL…TLSP). Residues 182–191 (NGGGSGGGGD) show a composition bias toward gly residues. Residues 231–275 (KNNQNLHHKQQQLQQLQQLKQQHLQQQQKLKQEQQQEQQQQQEDE) adopt a coiled-coil conformation. Residues 257–271 (QQKLKQEQQQEQQQQ) are compositionally biased toward low complexity. The span at 279–289 (SPVSTSSTLSP) shows a compositional bias: polar residues. The 258-residue stretch at 369 to 626 (FKNLDFEARG…SSQLLQHPFL (258 aa)) folds into the Protein kinase domain. ATP-binding positions include 375–383 (EARGGFGSV) and Lys-403. Asp-494 acts as the Proton acceptor in catalysis.

This sequence belongs to the protein kinase superfamily. STE Ser/Thr protein kinase family. STE20 subfamily. Mg(2+) is required as a cofactor.

The enzyme catalyses L-seryl-[protein] + ATP = O-phospho-L-seryl-[protein] + ADP + H(+). It catalyses the reaction L-threonyl-[protein] + ATP = O-phospho-L-threonyl-[protein] + ADP + H(+). This is Probable serine/threonine-protein kinase mkcD from Dictyostelium discoideum (Social amoeba).